The chain runs to 169 residues: Inorganic pyrophosphatase (169 aa).

Substrate is bound by residues K26, R40, and Y52. Residues D62, D67, and D99 each coordinate Mg(2+). Y138 provides a ligand contact to substrate.

The protein belongs to the PPase family. In terms of assembly, homohexamer. The cofactor is Mg(2+).

The protein localises to the cytoplasm. The enzyme catalyses diphosphate + H2O = 2 phosphate + H(+). Functionally, catalyzes the hydrolysis of inorganic pyrophosphate (PPi) forming two phosphate ions. This Thermoplasma volcanium (strain ATCC 51530 / DSM 4299 / JCM 9571 / NBRC 15438 / GSS1) protein is Inorganic pyrophosphatase.